The following is a 389-amino-acid chain: Arginine biosynthesis bifunctional protein ArgJ (389 aa).

Residues Thr150, Lys173, Thr184, Glu263, Asn384, and Thr389 each coordinate substrate. Residue Thr184 is the Nucleophile of the active site.

The protein belongs to the ArgJ family. As to quaternary structure, heterotetramer of two alpha and two beta chains.

It is found in the cytoplasm. The enzyme catalyses N(2)-acetyl-L-ornithine + L-glutamate = N-acetyl-L-glutamate + L-ornithine. It catalyses the reaction L-glutamate + acetyl-CoA = N-acetyl-L-glutamate + CoA + H(+). Its pathway is amino-acid biosynthesis; L-arginine biosynthesis; L-ornithine and N-acetyl-L-glutamate from L-glutamate and N(2)-acetyl-L-ornithine (cyclic): step 1/1. It functions in the pathway amino-acid biosynthesis; L-arginine biosynthesis; N(2)-acetyl-L-ornithine from L-glutamate: step 1/4. Catalyzes two activities which are involved in the cyclic version of arginine biosynthesis: the synthesis of N-acetylglutamate from glutamate and acetyl-CoA as the acetyl donor, and of ornithine by transacetylation between N(2)-acetylornithine and glutamate. This is Arginine biosynthesis bifunctional protein ArgJ from Deinococcus radiodurans (strain ATCC 13939 / DSM 20539 / JCM 16871 / CCUG 27074 / LMG 4051 / NBRC 15346 / NCIMB 9279 / VKM B-1422 / R1).